The primary structure comprises 212 residues: Inactive ribonuclease-like protein 10 (212 aa).

The N-terminal stretch at 1 to 24 (MKLTLVQIFFMMLLLLLGLGVGLG) is a signal peptide.

It belongs to the pancreatic ribonuclease family. Post-translationally, the N-terminus is blocked. Glycosylated. Male-specific expression in proximal caput of the epididymis.

The protein resides in the secreted. Secreted proximal epididymal protein required for post-testicular sperm maturation and male fertility. May be involved in sperm adhesion to the egg zona pellucida. Does not have ribonuclease activity. The chain is Inactive ribonuclease-like protein 10 (RNASE10) from Ovis aries (Sheep).